Here is a 339-residue protein sequence, read N- to C-terminus: tRNA N6-adenosine threonylcarbamoyltransferase (339 aa).

Residues His112 and His116 each coordinate Fe cation. Substrate contacts are provided by residues 135 to 139 (LVSGG), Asp168, Gly181, and Asn273. Position 301 (Asp301) interacts with Fe cation.

It belongs to the KAE1 / TsaD family. Fe(2+) is required as a cofactor.

It is found in the cytoplasm. The catalysed reaction is L-threonylcarbamoyladenylate + adenosine(37) in tRNA = N(6)-L-threonylcarbamoyladenosine(37) in tRNA + AMP + H(+). Required for the formation of a threonylcarbamoyl group on adenosine at position 37 (t(6)A37) in tRNAs that read codons beginning with adenine. Is involved in the transfer of the threonylcarbamoyl moiety of threonylcarbamoyl-AMP (TC-AMP) to the N6 group of A37, together with TsaE and TsaB. TsaD likely plays a direct catalytic role in this reaction. This is tRNA N6-adenosine threonylcarbamoyltransferase from Coxiella burnetii (strain RSA 493 / Nine Mile phase I).